A 593-amino-acid chain; its full sequence is Glucose-6-phosphate 1-dehydrogenase, chloroplastic (593 aa).

NADP(+)-binding positions include 116-123 (GASGDLAK) and Arg150. Cys168 and Cys176 form a disulfide bridge. Lys253 contacts NADP(+). D-glucose 6-phosphate contacts are provided by residues Lys253, 283-287 (HYLGK), Glu321, and Asp340. His345 (proton acceptor) is an active-site residue. Lys438 lines the NADP(+) pocket. The D-glucose 6-phosphate site is built by Lys441 and Arg446. The NADP(+) site is built by Arg451 and Arg480. Gln482 is a D-glucose 6-phosphate binding site. NADP(+)-binding positions include 488–490 (YLK) and Arg573.

It belongs to the glucose-6-phosphate dehydrogenase family. In terms of assembly, homodimer.

It is found in the plastid. The protein resides in the chloroplast. The enzyme catalyses D-glucose 6-phosphate + NADP(+) = 6-phospho-D-glucono-1,5-lactone + NADPH + H(+). It functions in the pathway carbohydrate degradation; pentose phosphate pathway; D-ribulose 5-phosphate from D-glucose 6-phosphate (oxidative stage): step 1/3. Regulated by metabolites. Post-translationally inactivated by cysteine-mediated redox modification via the ferredoxin-thioredoxin system in the light and this avoids futile cycles with photosynthetic CO2 fixation. In terms of biological role, catalyzes the rate-limiting step of the oxidative pentose-phosphate pathway, which represents a route for the dissimilation of carbohydrates besides glycolysis. The main function of this enzyme is to provide reducing power (NADPH) and pentose phosphates for fatty acid and nucleic acid synthesis which are involved in membrane synthesis and cell division. This chain is Glucose-6-phosphate 1-dehydrogenase, chloroplastic, found in Nicotiana tabacum (Common tobacco).